The sequence spans 1165 residues: Symplekin (1165 aa).

HEAT repeat units follow at residues 23 to 58 (TATARAKVVDWCNELVIASPSTKCELLAKVQETVLG), 61 to 95 (AELAEEFLESVLSLAHDSNMEVRKQVVAFVEQVCK), 98 to 140 (VELL…YLCS), 147 to 186 (SAEQAWNILSLIKAQILDMIDNENDGIRTNAIKFLEGVVV), and 218 to 257 (KLQEEGNNILDILLQFHGTTHISSVNLIACTSSLCTIAKM). Residues 365–384 (DQQQREMELDTEELERQKQK) form a disordered region. Over residues 367-384 (QQREMELDTEELERQKQK) the composition is skewed to basic and acidic residues.

This sequence belongs to the Symplekin family. As to quaternary structure, interacts with Cpsf73 and Cpsf100 forming a core cleavage factor required for both polyadenylated and histone mRNA processing. Interacts with Slbp and Lsm11.

The protein resides in the nucleus. Functionally, component of a protein complex required for cotranscriptional processing of 3'-ends of polyadenylated and histone pre-mRNA. Involved in germline stem cell transit amplification, differentiation and mitosis-to-meiosis transition. In Drosophila melanogaster (Fruit fly), this protein is Symplekin.